We begin with the raw amino-acid sequence, 66 residues long: Large ribosomal subunit protein bL35 (66 aa).

Basic residues predominate over residues 1–26 (MPKMKTHRGSAKRFKKTASGKLKRGH). Positions 1–28 (MPKMKTHRGSAKRFKKTASGKLKRGHAY) are disordered.

It belongs to the bacterial ribosomal protein bL35 family.

The chain is Large ribosomal subunit protein bL35 from Geobacillus thermodenitrificans (strain NG80-2).